The chain runs to 482 residues: Bifunctional protein GlmU (482 aa).

Residues methionine 1–arginine 238 are pyrophosphorylase. UDP-N-acetyl-alpha-D-glucosamine is bound by residues leucine 12–glycine 15, lysine 26, glutamine 79, and glycine 84–threonine 85. Aspartate 110 serves as a coordination point for Mg(2+). Residues glycine 147, glutamate 163, asparagine 178, and asparagine 236 each coordinate UDP-N-acetyl-alpha-D-glucosamine. Asparagine 236 lines the Mg(2+) pocket. The interval valine 239 to alanine 259 is linker. The interval glycine 260–aspartate 482 is N-acetyltransferase. 2 residues coordinate UDP-N-acetyl-alpha-D-glucosamine: arginine 341 and lysine 359. Histidine 371 serves as the catalytic Proton acceptor. 2 residues coordinate UDP-N-acetyl-alpha-D-glucosamine: tyrosine 374 and asparagine 385. Residues alanine 388, asparagine 394–tyrosine 395, serine 413, alanine 431, and arginine 448 contribute to the acetyl-CoA site.

It in the N-terminal section; belongs to the N-acetylglucosamine-1-phosphate uridyltransferase family. In the C-terminal section; belongs to the transferase hexapeptide repeat family. Homotrimer. Mg(2+) is required as a cofactor.

The protein localises to the cytoplasm. The enzyme catalyses alpha-D-glucosamine 1-phosphate + acetyl-CoA = N-acetyl-alpha-D-glucosamine 1-phosphate + CoA + H(+). It catalyses the reaction N-acetyl-alpha-D-glucosamine 1-phosphate + UTP + H(+) = UDP-N-acetyl-alpha-D-glucosamine + diphosphate. The protein operates within nucleotide-sugar biosynthesis; UDP-N-acetyl-alpha-D-glucosamine biosynthesis; N-acetyl-alpha-D-glucosamine 1-phosphate from alpha-D-glucosamine 6-phosphate (route II): step 2/2. Its pathway is nucleotide-sugar biosynthesis; UDP-N-acetyl-alpha-D-glucosamine biosynthesis; UDP-N-acetyl-alpha-D-glucosamine from N-acetyl-alpha-D-glucosamine 1-phosphate: step 1/1. It functions in the pathway bacterial outer membrane biogenesis; LPS lipid A biosynthesis. In terms of biological role, catalyzes the last two sequential reactions in the de novo biosynthetic pathway for UDP-N-acetylglucosamine (UDP-GlcNAc). The C-terminal domain catalyzes the transfer of acetyl group from acetyl coenzyme A to glucosamine-1-phosphate (GlcN-1-P) to produce N-acetylglucosamine-1-phosphate (GlcNAc-1-P), which is converted into UDP-GlcNAc by the transfer of uridine 5-monophosphate (from uridine 5-triphosphate), a reaction catalyzed by the N-terminal domain. This Streptomyces avermitilis (strain ATCC 31267 / DSM 46492 / JCM 5070 / NBRC 14893 / NCIMB 12804 / NRRL 8165 / MA-4680) protein is Bifunctional protein GlmU.